Here is a 96-residue protein sequence, read N- to C-terminus: Large ribosomal subunit protein uL23 (96 aa).

Belongs to the universal ribosomal protein uL23 family. In terms of assembly, part of the 50S ribosomal subunit. Contacts protein L29, and trigger factor when it is bound to the ribosome.

Functionally, one of the early assembly proteins it binds 23S rRNA. One of the proteins that surrounds the polypeptide exit tunnel on the outside of the ribosome. Forms the main docking site for trigger factor binding to the ribosome. The sequence is that of Large ribosomal subunit protein uL23 from Clostridium novyi (strain NT).